We begin with the raw amino-acid sequence, 449 residues long: Phosphoglucosamine mutase (449 aa).

The active-site Phosphoserine intermediate is Ser104. Residues Ser104, Asp243, Asp245, and Asp247 each coordinate Mg(2+). A Phosphoserine modification is found at Ser104.

Belongs to the phosphohexose mutase family. Mg(2+) serves as cofactor. In terms of processing, activated by phosphorylation.

It carries out the reaction alpha-D-glucosamine 1-phosphate = D-glucosamine 6-phosphate. Functionally, catalyzes the conversion of glucosamine-6-phosphate to glucosamine-1-phosphate. This chain is Phosphoglucosamine mutase, found in Xanthomonas campestris pv. campestris (strain 8004).